Reading from the N-terminus, the 163-residue chain is Nucleotide-binding protein Dhaf_3127 (163 aa).

Belongs to the YajQ family.

In terms of biological role, nucleotide-binding protein. The sequence is that of Nucleotide-binding protein Dhaf_3127 from Desulfitobacterium hafniense (strain DSM 10664 / DCB-2).